Consider the following 463-residue polypeptide: Lipase 6 (463 aa).

Positions 1–16 (MRDLILFLSLLHTIFA) are cleaved as a signal peptide. A disulfide bond links Cys112 and Cys285. Catalysis depends on Ser196, which acts as the Charge relay system. Asn231 carries an N-linked (GlcNAc...) asparagine glycan. Catalysis depends on charge relay system residues Asp348 and His381. Cys364 and Cys409 are oxidised to a cystine. Residue Asn422 is glycosylated (N-linked (GlcNAc...) asparagine).

The protein belongs to the AB hydrolase superfamily. Lipase family. Class Lip subfamily.

The protein resides in the secreted. The enzyme catalyses a triacylglycerol + H2O = a diacylglycerol + a fatty acid + H(+). Functionally, secreted lipase that is able to hydrolyze both the neutral triacylglycerols and the monopalmitate ester Tween 40, allowing the use of hydrolyzed products as carbon sources. Has broad lipolytic activity, which may be important for colonization and subsequent infection, therefore contributing to the persistence and virulence in human tissue. This Candida albicans (strain SC5314 / ATCC MYA-2876) (Yeast) protein is Lipase 6.